A 258-amino-acid polypeptide reads, in one-letter code: UPF0246 protein ACIAD2218 (258 aa).

The protein belongs to the UPF0246 family.

The protein is UPF0246 protein ACIAD2218 of Acinetobacter baylyi (strain ATCC 33305 / BD413 / ADP1).